The following is a 239-amino-acid chain: tRNA uridine(34) hydroxylase (239 aa).

The Rhodanese domain occupies 124-214 (QGRELVMLDT…GILKYFEETD (91 aa)). Cys178 acts as the Cysteine persulfide intermediate in catalysis.

It belongs to the TrhO family.

It carries out the reaction uridine(34) in tRNA + AH2 + O2 = 5-hydroxyuridine(34) in tRNA + A + H2O. Its function is as follows. Catalyzes oxygen-dependent 5-hydroxyuridine (ho5U) modification at position 34 in tRNAs. The protein is tRNA uridine(34) hydroxylase of Bordetella parapertussis (strain 12822 / ATCC BAA-587 / NCTC 13253).